Consider the following 604-residue polypeptide: Beta-alanine transporter (604 aa).

Topologically, residues methionine 1–serine 23 are cytoplasmic. Residues valine 24–alanine 44 traverse the membrane as a helical segment. The Extracellular portion of the chain corresponds to threonine 45–serine 151. N-linked (GlcNAc...) asparagine glycans are attached at residues asparagine 68 and asparagine 88. The chain crosses the membrane as a helical span at residues phenylalanine 152–phenylalanine 172. Residues glycine 173–arginine 182 lie on the Cytoplasmic side of the membrane. The chain crosses the membrane as a helical span at residues proline 183–tryptophan 203. Residues asparagine 204 to arginine 212 lie on the Extracellular side of the membrane. Residues phenylalanine 213–leucine 233 traverse the membrane as a helical segment. At valine 234 to threonine 243 the chain is on the cytoplasmic side. A helical membrane pass occupies residues isoleucine 244–valine 264. Over arginine 265 to arginine 268 the chain is Extracellular. A helical transmembrane segment spans residues glutamate 269–proline 289. The Cytoplasmic segment spans residues glutamate 290–threonine 362. The chain crosses the membrane as a helical span at residues leucine 363–alanine 383. Residues proline 384–glutamate 390 lie on the Extracellular side of the membrane. Residues isoleucine 391–glycine 411 form a helical membrane-spanning segment. At leucine 412–arginine 418 the chain is on the cytoplasmic side. A helical transmembrane segment spans residues tryptophan 419–proline 439. The Extracellular portion of the chain corresponds to aspartate 440–threonine 442. Residues leucine 443–methionine 463 form a helical membrane-spanning segment. At alanine 464–arginine 473 the chain is on the cytoplasmic side. The chain crosses the membrane as a helical span at residues glycine 474–isoleucine 494. The Extracellular segment spans residues asparagine 495–methionine 501. Residues leucine 502–leucine 522 traverse the membrane as a helical segment. At leucine 523 to leucine 604 the chain is on the cytoplasmic side.

Belongs to the major facilitator (TC 2.A.1) superfamily. Organic cation transporter (TC 2.A.1.19) family. Expressed in the head and predominantly in the retinal pigment cells of the compound eye.

It localises to the cell membrane. Functionally, beta-alanine transporter required for the uptake of beta-alanine by the glia. Required for the recycling process of the neurotransmitter histamine in photoreceptor neurons of the compound eye and therefore for photoreceptor synaptic transmission. Following histamine release from photoreceptors and its uptake by glia, histamine is conjugated to beta-alanine by e/Ebony to form the inactive metabolite, carcinine. The polypeptide is Beta-alanine transporter (Drosophila melanogaster (Fruit fly)).